A 117-amino-acid chain; its full sequence is uncharacterized protein (117 aa).

The protein localises to the cytoplasm. It is found in the nucleus. This is an uncharacterized protein from Saccharomyces cerevisiae (strain ATCC 204508 / S288c) (Baker's yeast).